The following is a 621-amino-acid chain: Cryptochrome-1 (621 aa).

The Photolyase/cryptochrome alpha/beta domain maps to 3–132 (VNAVHWFRKG…EVIVRISHTL (130 aa)). 3 short sequence motifs (LIR) span residues 50-54 (NRWRF), 82-87 (DVFPRL), and 151-156 (KRFQTL). Position 252 (Ser-252) interacts with FAD. 4 short sequence motifs (LIR) span residues 255–260 (LRFGCL), 271–276 (DLYKKV), 285–290 (SLYGQL), and 335–339 (TGFPW). Position 289 (Gln-289) interacts with FAD. Residue His-355 participates in FAD binding. The short motif at 379–384 (KVFEEL) is the LIR 8 element. Residue 387–389 (DAD) coordinates FAD. Short sequence motifs (LIR) lie at residues 395–400 (GSWMWL), 411–416 (HCYCPV), 430–435 (RRYLPV), 486–491 (QIYQQL), and 492–497 (SRYRGL). A disordered region spans residues 581-621 (QSHLMQPGRASLGTGISAGKRPNPEEETQSVGPKVQRQSTN).

The protein belongs to the DNA photolyase class-1 family. Component of the circadian core oscillator, which includes the CRY proteins, CLOCK or NPAS2, BMAL1 or BMAL2, CSNK1E, and the PER proteins. FAD serves as cofactor. Requires (6R)-5,10-methylene-5,6,7,8-tetrahydrofolate as cofactor. In terms of tissue distribution, expressed in the pineal gland.

The protein resides in the cytoplasm. Its subcellular location is the nucleus. In terms of biological role, transcriptional repressor which forms a core component of the circadian clock. The circadian clock, an internal time-keeping system, regulates various physiological processes through the generation of approximately 24 hour circadian rhythms in gene expression, which are translated into rhythms in metabolism and behavior. It is derived from the Latin roots 'circa' (about) and 'diem' (day) and acts as an important regulator of a wide array of physiological functions including metabolism, sleep, body temperature, blood pressure, endocrine, immune, cardiovascular, and renal function. Consists of two major components: the central clock, residing in the suprachiasmatic nucleus (SCN) of the brain, and the peripheral clocks that are present in nearly every tissue and organ system. Both the central and peripheral clocks can be reset by environmental cues, also known as Zeitgebers (German for 'timegivers'). The predominant Zeitgeber for the central clock is light, which is sensed by retina and signals directly to the SCN. The central clock entrains the peripheral clocks through neuronal and hormonal signals, body temperature and feeding-related cues, aligning all clocks with the external light/dark cycle. Circadian rhythms allow an organism to achieve temporal homeostasis with its environment at the molecular level by regulating gene expression to create a peak of protein expression once every 24 hours to control when a particular physiological process is most active with respect to the solar day. Transcription and translation of core clock components (CLOCK, NPAS2, BMAL1, BMAL2, PER1, PER2, PER3, CRY1 and CRY2) plays a critical role in rhythm generation, whereas delays imposed by post-translational modifications (PTMs) are important for determining the period (tau) of the rhythms (tau refers to the period of a rhythm and is the length, in time, of one complete cycle). A diurnal rhythm is synchronized with the day/night cycle, while the ultradian and infradian rhythms have a period shorter and longer than 24 hours, respectively. Disruptions in the circadian rhythms contribute to the pathology of cardiovascular diseases, cancer, metabolic syndromes and aging. A transcription/translation feedback loop (TTFL) forms the core of the molecular circadian clock mechanism. Transcription factors, CLOCK or NPAS2 and BMAL1 or BMAL2, form the positive limb of the feedback loop, act in the form of a heterodimer and activate the transcription of core clock genes and clock-controlled genes (involved in key metabolic processes), harboring E-box elements (5'-CACGTG-3') within their promoters. The core clock genes: PER1/2/3 and CRY1/2 which are transcriptional repressors form the negative limb of the feedback loop and interact with the CLOCK|NPAS2-BMAL1|BMAL2 heterodimer inhibiting its activity and thereby negatively regulating their own expression. This heterodimer also activates nuclear receptors NR1D1/2 and RORA/B/G, which form a second feedback loop and which activate and repress BMAL1 transcription, respectively. CRY1 and CRY2 have redundant functions but also differential and selective contributions at least in defining the pace of the SCN circadian clock and its circadian transcriptional outputs. More potent transcriptional repressor in cerebellum and liver than CRY2, though more effective in lengthening the period of the SCN oscillator. On its side, CRY2 seems to play a critical role in tuning SCN circadian period by opposing the action of CRY1. With CRY2, is dispensable for circadian rhythm generation but necessary for the development of intercellular networks for rhythm synchrony. Capable of translocating circadian clock core proteins such as PER proteins to the nucleus. Interacts with CLOCK-BMAL1 independently of PER proteins and is found at CLOCK-BMAL1-bound sites, suggesting that CRY may act as a molecular gatekeeper to maintain CLOCK-BMAL1 in a poised and repressed state until the proper time for transcriptional activation. Represses CLOCK-BMAL1-mediated transcriptional activation. This chain is Cryptochrome-1 (CRY1), found in Gallus gallus (Chicken).